Consider the following 287-residue polypeptide: Nucleotide-binding protein TGRD_433 (287 aa).

Position 9-16 (9-16 (GMSGAGKS)) interacts with ATP. Residue 60-63 (DSRA) coordinates GTP.

This sequence belongs to the RapZ-like family.

In terms of biological role, displays ATPase and GTPase activities. This is Nucleotide-binding protein TGRD_433 from Endomicrobium trichonymphae.